Here is a 265-residue protein sequence, read N- to C-terminus: MDFKYTEEKETIKINNIMIHKYTVLYTSNCIMDIYSEEEKITCFSNRLVFLERGVNISVRMQKQILSEKPYVAFRLNGDMLRHLKDALMIIYGMSKIDTNACRSMSRKIMTTEVNKTLLDELKNINSHDNSAFISSLIYLISKLENNEKIIESIYISSVSFFSDKVRNLIEKDLSRKWTLGIIADAFNASEITIRKRLESENTNFNQILMQLRMSKAALLLLENSYQISQISNMIGISSASYFIRIFNKHYGVTPKQFFTYFKGG.

2 residues coordinate decanoate: His20 and Arg75. The region spanning 164-261 (DKVRNLIEKD…GVTPKQFFTY (98 aa)) is the HTH araC/xylS-type domain. 2 DNA-binding regions (H-T-H motif) span residues 181-202 (GIIADAFNASEITIRKRLESEN) and 228-251 (ISQISNMIGISSASYFIRIFNKHY).

As to quaternary structure, homodimer; each subunit binds one decanoate molecule.

The protein localises to the cytoplasm. Its activity is regulated as follows. Rns-dependent expression of pilins and outer membrane proteins CexE-alpha and CexE-epsilon are inhibited in vivo by decanoic acid (decanoate); has no effect on expression of DnaK or flagellins. Decanoate relieves Rns-dependent repression of nlpA. A transcription factor required for the expression of the CS1 and CS2 adhesins of enterotoxigenic E.coli. Required for expression of pilins and some outer membrane lipoproteins. Represses expression of nlpA. This Escherichia coli protein is DNA-binding dual transcriptional regulator Rns.